A 259-amino-acid chain; its full sequence is UPF0246 protein Avin_11220 (259 aa).

The protein belongs to the UPF0246 family.

This is UPF0246 protein Avin_11220 from Azotobacter vinelandii (strain DJ / ATCC BAA-1303).